Reading from the N-terminus, the 504-residue chain is Aspartyl/glutamyl-tRNA(Asn/Gln) amidotransferase subunit B (504 aa).

It belongs to the GatB/GatE family. GatB subfamily. Heterotrimer of A, B and C subunits.

The enzyme catalyses L-glutamyl-tRNA(Gln) + L-glutamine + ATP + H2O = L-glutaminyl-tRNA(Gln) + L-glutamate + ADP + phosphate + H(+). It catalyses the reaction L-aspartyl-tRNA(Asn) + L-glutamine + ATP + H2O = L-asparaginyl-tRNA(Asn) + L-glutamate + ADP + phosphate + 2 H(+). Functionally, allows the formation of correctly charged Asn-tRNA(Asn) or Gln-tRNA(Gln) through the transamidation of misacylated Asp-tRNA(Asn) or Glu-tRNA(Gln) in organisms which lack either or both of asparaginyl-tRNA or glutaminyl-tRNA synthetases. The reaction takes place in the presence of glutamine and ATP through an activated phospho-Asp-tRNA(Asn) or phospho-Glu-tRNA(Gln). The protein is Aspartyl/glutamyl-tRNA(Asn/Gln) amidotransferase subunit B of Tropheryma whipplei (strain Twist) (Whipple's bacillus).